A 649-amino-acid polypeptide reads, in one-letter code: Acetyl-coenzyme A synthetase (649 aa).

CoA-binding positions include 191-194, Thr-311, and Asn-335; that span reads RGGR. ATP-binding positions include 387–389, 411–416, Asp-500, and Arg-515; these read GEP and DTWWQT. Ser-523 contacts CoA. Arg-526 contacts ATP. Mg(2+) is bound by residues Val-537, His-539, and Ile-542. Position 584 (Arg-584) interacts with CoA. Lys-609 is subject to N6-acetyllysine.

Belongs to the ATP-dependent AMP-binding enzyme family. Requires Mg(2+) as cofactor. In terms of processing, acetylated. Deacetylation by the SIR2-homolog deacetylase activates the enzyme.

It catalyses the reaction acetate + ATP + CoA = acetyl-CoA + AMP + diphosphate. Catalyzes the conversion of acetate into acetyl-CoA (AcCoA), an essential intermediate at the junction of anabolic and catabolic pathways. AcsA undergoes a two-step reaction. In the first half reaction, AcsA combines acetate with ATP to form acetyl-adenylate (AcAMP) intermediate. In the second half reaction, it can then transfer the acetyl group from AcAMP to the sulfhydryl group of CoA, forming the product AcCoA. This chain is Acetyl-coenzyme A synthetase, found in Psychromonas ingrahamii (strain DSM 17664 / CCUG 51855 / 37).